Here is a 614-residue protein sequence, read N- to C-terminus: Phosphomethylpyrimidine synthase (614 aa).

Substrate contacts are provided by residues asparagine 226, methionine 255, tyrosine 284, histidine 320, 340 to 342 (SRG), 381 to 384 (DGLR), and glutamate 420. Histidine 424 contributes to the Zn(2+) binding site. Tyrosine 447 lines the substrate pocket. Histidine 488 is a Zn(2+) binding site. [4Fe-4S] cluster contacts are provided by cysteine 568, cysteine 571, and cysteine 576.

This sequence belongs to the ThiC family. As to quaternary structure, homodimer. Requires [4Fe-4S] cluster as cofactor.

The catalysed reaction is 5-amino-1-(5-phospho-beta-D-ribosyl)imidazole + S-adenosyl-L-methionine = 4-amino-2-methyl-5-(phosphooxymethyl)pyrimidine + CO + 5'-deoxyadenosine + formate + L-methionine + 3 H(+). The protein operates within cofactor biosynthesis; thiamine diphosphate biosynthesis. Its function is as follows. Catalyzes the synthesis of the hydroxymethylpyrimidine phosphate (HMP-P) moiety of thiamine from aminoimidazole ribotide (AIR) in a radical S-adenosyl-L-methionine (SAM)-dependent reaction. This Acidovorax ebreus (strain TPSY) (Diaphorobacter sp. (strain TPSY)) protein is Phosphomethylpyrimidine synthase.